A 230-amino-acid chain; its full sequence is Large ribosomal subunit protein uL1 (230 aa).

It belongs to the universal ribosomal protein uL1 family. In terms of assembly, part of the 50S ribosomal subunit.

Binds directly to 23S rRNA. The L1 stalk is quite mobile in the ribosome, and is involved in E site tRNA release. In terms of biological role, protein L1 is also a translational repressor protein, it controls the translation of the L11 operon by binding to its mRNA. In Acidithiobacillus ferrooxidans (strain ATCC 53993 / BNL-5-31) (Leptospirillum ferrooxidans (ATCC 53993)), this protein is Large ribosomal subunit protein uL1.